Consider the following 184-residue polypeptide: Peptidyl-tRNA hydrolase (184 aa).

Y17 is a tRNA binding site. Catalysis depends on H22, which acts as the Proton acceptor. 3 residues coordinate tRNA: F71, N73, and N119.

Belongs to the PTH family. In terms of assembly, monomer.

The protein resides in the cytoplasm. The enzyme catalyses an N-acyl-L-alpha-aminoacyl-tRNA + H2O = an N-acyl-L-amino acid + a tRNA + H(+). Hydrolyzes ribosome-free peptidyl-tRNAs (with 1 or more amino acids incorporated), which drop off the ribosome during protein synthesis, or as a result of ribosome stalling. Functionally, catalyzes the release of premature peptidyl moieties from peptidyl-tRNA molecules trapped in stalled 50S ribosomal subunits, and thus maintains levels of free tRNAs and 50S ribosomes. The sequence is that of Peptidyl-tRNA hydrolase from Corynebacterium diphtheriae (strain ATCC 700971 / NCTC 13129 / Biotype gravis).